A 299-amino-acid polypeptide reads, in one-letter code: Pyrroline-5-carboxylate reductase 2 (299 aa).

This sequence belongs to the pyrroline-5-carboxylate reductase family. As to quaternary structure, homodecamer; composed of 5 homodimers.

It carries out the reaction L-proline + NADP(+) = (S)-1-pyrroline-5-carboxylate + NADPH + 2 H(+). It catalyses the reaction L-proline + NAD(+) = (S)-1-pyrroline-5-carboxylate + NADH + 2 H(+). It participates in amino-acid biosynthesis; L-proline biosynthesis; L-proline from L-glutamate 5-semialdehyde: step 1/1. This is Pyrroline-5-carboxylate reductase 2 (pycr2) from Dictyostelium discoideum (Social amoeba).